The following is a 912-amino-acid chain: DNA ligase 4 (912 aa).

ATP-binding residues include E276, T277, K278, L279, R283, E336, K350, F372, E432, K437, K454, and K456. The active-site N6-AMP-lysine intermediate is the K278. E336 serves as a coordination point for Mg(2+). E432 contributes to the Mg(2+) binding site. The interval 615–625 (LASKHLYIDEY) is required for catalytic activity. BRCT domains lie at 659–748 (KVSS…PAFM) and 809–912 (CKLC…QFLI).

This sequence belongs to the ATP-dependent DNA ligase family. Interacts with XRCC4; the LIG4-XRCC4 subcomplex has a 1:2 stoichiometry. Component of the core long-range non-homologous end joining (NHEJ) complex (also named DNA-PK complex) composed of PRKDC, LIG4, XRCC4, XRCC6/Ku70, XRCC5/Ku86 and NHEJ1/XLF. Additional component of the NHEJ complex includes PAXX. Following autophosphorylation, PRKDC dissociates from DNA, leading to formation of the short-range NHEJ complex, composed of LIG4, XRCC4, XRCC6/Ku70, XRCC5/Ku86 and NHEJ1/XLF. Requires Mg(2+) as cofactor.

It is found in the nucleus. It carries out the reaction ATP + (deoxyribonucleotide)n-3'-hydroxyl + 5'-phospho-(deoxyribonucleotide)m = (deoxyribonucleotide)n+m + AMP + diphosphate.. DNA ligase involved in DNA non-homologous end joining (NHEJ); required for double-strand break (DSB) repair and V(D)J recombination. Catalyzes the NHEJ ligation step of the broken DNA during DSB repair by resealing the DNA breaks after the gap filling is completed. Joins single-strand breaks in a double-stranded polydeoxynucleotide in an ATP-dependent reaction. LIG4 is mechanistically flexible: it can ligate nicks as well as compatible DNA overhangs alone, while in the presence of XRCC4, it can ligate ends with 2-nucleotides (nt) microhomology and 1-nt gaps. Forms a subcomplex with XRCC4; the LIG4-XRCC4 subcomplex is responsible for the NHEJ ligation step and XRCC4 enhances the joining activity of LIG4. The chain is DNA ligase 4 from Gallus gallus (Chicken).